A 196-amino-acid polypeptide reads, in one-letter code: Chloroplastic ATP-dependent Clp protease proteolytic subunit 1 (196 aa).

The active-site Nucleophile is the Ser-101. The active site involves His-126.

The protein belongs to the peptidase S14 family. Component of the chloroplastic Clp protease core complex which consist of at least 16 proteins: CLPP4 (3 copies), CLPP5 (3 copies), CLPR4 (2 copies), ClpP1 (1 copy), CLPP6 (1 copy), CLPR2 (1 copy), CLPT1 (1 copy), CLPT2 (1 copy) and 3 copies of CLPP3 and/or CLPR1 and/or CLPR3. The core complex is organized in two heptameric rings, one containing CLPP3,4,5,6 in a 1:2:3:1 ratio and the other CLPP1 and CLPR1,2,3,4 in a 3:1:1:1:1 ratio. In terms of tissue distribution, mostly expressed in leaves. Also detected in stems, and to a lower extent, in roots (at protein level).

It is found in the plastid. The protein localises to the chloroplast stroma. The enzyme catalyses Hydrolysis of proteins to small peptides in the presence of ATP and magnesium. alpha-casein is the usual test substrate. In the absence of ATP, only oligopeptides shorter than five residues are hydrolyzed (such as succinyl-Leu-Tyr-|-NHMec, and Leu-Tyr-Leu-|-Tyr-Trp, in which cleavage of the -Tyr-|-Leu- and -Tyr-|-Trp bonds also occurs).. Cleaves peptides in various proteins in a process that requires ATP hydrolysis. Has a chymotrypsin-like activity. Plays a major role in the degradation of misfolded proteins. In Arabidopsis thaliana (Mouse-ear cress), this protein is Chloroplastic ATP-dependent Clp protease proteolytic subunit 1.